A 229-amino-acid chain; its full sequence is Stage III sporulation protein AG (229 aa).

A helical transmembrane segment spans residues 30-50 (YHYFLFVFVLGVSFMLVSQLF). Disordered stretches follow at residues 64 to 93 (AVSS…KDSI) and 136 to 159 (SNKN…DQSS). Residues 71 to 93 (ADSKEKTAEVFKASKSDKPKDSI) are compositionally biased toward basic and acidic residues.

The protein localises to the cell membrane. This is Stage III sporulation protein AG (spoIIIAG) from Bacillus subtilis (strain 168).